Reading from the N-terminus, the 117-residue chain is Large ribosomal subunit protein bL19 (117 aa).

The protein belongs to the bacterial ribosomal protein bL19 family.

Its function is as follows. This protein is located at the 30S-50S ribosomal subunit interface and may play a role in the structure and function of the aminoacyl-tRNA binding site. In Bacteroides fragilis (strain ATCC 25285 / DSM 2151 / CCUG 4856 / JCM 11019 / LMG 10263 / NCTC 9343 / Onslow / VPI 2553 / EN-2), this protein is Large ribosomal subunit protein bL19.